A 143-amino-acid chain; its full sequence is Large ribosomal subunit protein uL11 (143 aa).

It belongs to the universal ribosomal protein uL11 family. Part of the ribosomal stalk of the 50S ribosomal subunit. Interacts with L10 and the large rRNA to form the base of the stalk. L10 forms an elongated spine to which L12 dimers bind in a sequential fashion forming a multimeric L10(L12)X complex. In terms of processing, one or more lysine residues are methylated.

Its function is as follows. Forms part of the ribosomal stalk which helps the ribosome interact with GTP-bound translation factors. This is Large ribosomal subunit protein uL11 from Bifidobacterium longum subsp. infantis (strain ATCC 15697 / DSM 20088 / JCM 1222 / NCTC 11817 / S12).